A 77-amino-acid polypeptide reads, in one-letter code: uncharacterized protein (77 aa).

2 consecutive transmembrane segments (helical) span residues V22–G42 and L44–G64.

The protein localises to the cell membrane. This is an uncharacterized protein from Methanocaldococcus jannaschii (strain ATCC 43067 / DSM 2661 / JAL-1 / JCM 10045 / NBRC 100440) (Methanococcus jannaschii).